A 622-amino-acid polypeptide reads, in one-letter code: Histone-lysine N-methyltransferase set9 (622 aa).

An SET domain is found at 120–234; sequence SPFEITTTNR…IGEEITVSYG (115 aa). 4 disordered regions span residues 262–314, 335–394, 427–470, and 576–622; these read VPSE…GKFV, QPAG…TTAT, PTTS…RGKP, and DRGV…RMTM. A compositionally biased stretch (polar residues) spans 265–285; the sequence is EPQSKASTPALNDDTLSTDSH. A compositionally biased stretch (low complexity) spans 376 to 394; it reads PPSTAANESERSSTSTTAT. 2 stretches are compositionally biased toward polar residues: residues 427 to 437 and 446 to 458; these read PTTSLRSGSTE and DQPSTLKQGSIGS. A compositionally biased stretch (basic and acidic residues) spans 590 to 607; it reads SEPRTETEGSEGCEDRRT. Positions 608-622 are enriched in basic residues; that stretch reads TRASRRRTRSLRMTM.

Belongs to the class V-like SAM-binding methyltransferase superfamily. Histone-lysine methyltransferase family. Suvar4-20 subfamily.

The protein resides in the nucleus. It localises to the chromosome. It catalyses the reaction L-lysyl(20)-[histone H4] + 3 S-adenosyl-L-methionine = N(6),N(6),N(6)-trimethyl-L-lysyl(20)-[histone H4] + 3 S-adenosyl-L-homocysteine + 3 H(+). Histone methyltransferase that trimethylates 'Lys-20' of histone H4 to form H4K20me3. The chain is Histone-lysine N-methyltransferase set9 (set9) from Aspergillus fumigatus (strain ATCC MYA-4609 / CBS 101355 / FGSC A1100 / Af293) (Neosartorya fumigata).